A 177-amino-acid polypeptide reads, in one-letter code: Coatomer subunit zeta-1 (177 aa).

The protein belongs to the adaptor complexes small subunit family. Oligomeric complex that consists of at least the alpha, beta, beta', gamma, delta, epsilon and zeta subunits.

It is found in the cytoplasm. Its subcellular location is the golgi apparatus membrane. The protein resides in the cytoplasmic vesicle. It localises to the COPI-coated vesicle membrane. The coatomer is a cytosolic protein complex that binds to dilysine motifs and reversibly associates with Golgi non-clathrin-coated vesicles, which further mediate biosynthetic protein transport from the ER, via the Golgi up to the trans Golgi network. Coatomer complex is required for budding from Golgi membranes, and is essential for the retrograde Golgi-to-ER transport of dilysine-tagged proteins. The zeta subunit may be involved in regulating the coat assembly and, hence, the rate of biosynthetic protein transport due to its association-dissociation properties with the coatomer complex. The polypeptide is Coatomer subunit zeta-1 (COPZ1) (Oryza sativa subsp. japonica (Rice)).